A 615-amino-acid chain; its full sequence is DNA mismatch repair protein MutL (615 aa).

Positions 363-397 (FAEPAAREPVAPRYTPAPASGSRPAAPWPNAQPGY) are disordered. The span at 364 to 391 (AEPAAREPVAPRYTPAPASGSRPAAPWP) shows a compositional bias: low complexity.

Belongs to the DNA mismatch repair MutL/HexB family.

Functionally, this protein is involved in the repair of mismatches in DNA. It is required for dam-dependent methyl-directed DNA mismatch repair. May act as a 'molecular matchmaker', a protein that promotes the formation of a stable complex between two or more DNA-binding proteins in an ATP-dependent manner without itself being part of a final effector complex. In Escherichia coli O8 (strain IAI1), this protein is DNA mismatch repair protein MutL.